We begin with the raw amino-acid sequence, 280 residues long: Large ribosomal subunit protein uL2 (280 aa).

The segment at 226–280 (NPIDHPHGGGEGRTSGGRHPVTPWGKPTKGAKTRNKKKASSQLIIRSRHAKKKGR) is disordered. Basic residues-rich tracts occupy residues 254–264 (KGAKTRNKKKA) and 271–280 (RSRHAKKKGR).

This sequence belongs to the universal ribosomal protein uL2 family. Part of the 50S ribosomal subunit. Forms a bridge to the 30S subunit in the 70S ribosome.

Its function is as follows. One of the primary rRNA binding proteins. Required for association of the 30S and 50S subunits to form the 70S ribosome, for tRNA binding and peptide bond formation. It has been suggested to have peptidyltransferase activity; this is somewhat controversial. Makes several contacts with the 16S rRNA in the 70S ribosome. The sequence is that of Large ribosomal subunit protein uL2 from Roseobacter denitrificans (strain ATCC 33942 / OCh 114) (Erythrobacter sp. (strain OCh 114)).